The primary structure comprises 353 residues: Photosystem II protein D1 (353 aa).

Threonine 2 is subject to N-acetylthreonine. Residue threonine 2 is modified to Phosphothreonine. Transmembrane regions (helical) follow at residues tyrosine 29–serine 46, histidine 118–leucine 133, and tryptophan 142–alanine 156. Histidine 118 is a binding site for chlorophyll a. Tyrosine 126 contacts pheophytin a. [CaMn4O5] cluster-binding residues include aspartate 170 and glutamate 189. Residues phenylalanine 197–leucine 218 form a helical membrane-spanning segment. Histidine 198 lines the chlorophyll a pocket. Residues histidine 215 and serine 264–phenylalanine 265 contribute to the a quinone site. Histidine 215 contacts Fe cation. Histidine 272 lines the Fe cation pocket. Residues phenylalanine 274–leucine 288 form a helical membrane-spanning segment. [CaMn4O5] cluster is bound by residues histidine 332, glutamate 333, aspartate 342, and alanine 344. Residues serine 345–glycine 353 constitute a propeptide that is removed on maturation.

It belongs to the reaction center PufL/M/PsbA/D family. As to quaternary structure, PSII is composed of 1 copy each of membrane proteins PsbA, PsbB, PsbC, PsbD, PsbE, PsbF, PsbH, PsbI, PsbJ, PsbK, PsbL, PsbM, PsbT, PsbX, PsbY, PsbZ, Psb30/Ycf12, at least 3 peripheral proteins of the oxygen-evolving complex and a large number of cofactors. It forms dimeric complexes. The cofactor is The D1/D2 heterodimer binds P680, chlorophylls that are the primary electron donor of PSII, and subsequent electron acceptors. It shares a non-heme iron and each subunit binds pheophytin, quinone, additional chlorophylls, carotenoids and lipids. D1 provides most of the ligands for the Mn4-Ca-O5 cluster of the oxygen-evolving complex (OEC). There is also a Cl(-1) ion associated with D1 and D2, which is required for oxygen evolution. The PSII complex binds additional chlorophylls, carotenoids and specific lipids.. Post-translationally, tyr-161 forms a radical intermediate that is referred to as redox-active TyrZ, YZ or Y-Z. C-terminally processed by CTPA; processing is essential to allow assembly of the oxygen-evolving complex and thus photosynthetic growth.

Its subcellular location is the plastid. The protein localises to the chloroplast thylakoid membrane. It carries out the reaction 2 a plastoquinone + 4 hnu + 2 H2O = 2 a plastoquinol + O2. In terms of biological role, photosystem II (PSII) is a light-driven water:plastoquinone oxidoreductase that uses light energy to abstract electrons from H(2)O, generating O(2) and a proton gradient subsequently used for ATP formation. It consists of a core antenna complex that captures photons, and an electron transfer chain that converts photonic excitation into a charge separation. The D1/D2 (PsbA/PsbD) reaction center heterodimer binds P680, the primary electron donor of PSII as well as several subsequent electron acceptors. In Chaetosphaeridium globosum (Charophycean green alga), this protein is Photosystem II protein D1.